A 189-amino-acid chain; its full sequence is Peptidyl-tRNA hydrolase (189 aa).

Tyr-15 contributes to the tRNA binding site. Residue His-20 is the Proton acceptor of the active site. Positions 66, 68, and 114 each coordinate tRNA.

Belongs to the PTH family. Monomer.

Its subcellular location is the cytoplasm. The catalysed reaction is an N-acyl-L-alpha-aminoacyl-tRNA + H2O = an N-acyl-L-amino acid + a tRNA + H(+). Hydrolyzes ribosome-free peptidyl-tRNAs (with 1 or more amino acids incorporated), which drop off the ribosome during protein synthesis, or as a result of ribosome stalling. In terms of biological role, catalyzes the release of premature peptidyl moieties from peptidyl-tRNA molecules trapped in stalled 50S ribosomal subunits, and thus maintains levels of free tRNAs and 50S ribosomes. The sequence is that of Peptidyl-tRNA hydrolase from Streptococcus equi subsp. zooepidemicus (strain H70).